Here is a 400-residue protein sequence, read N- to C-terminus: Coiled-coil domain-containing glutamate-rich protein 1 (400 aa).

Positions Met1–Pro11 are enriched in basic and acidic residues. Disordered regions lie at residues Met1–Pro68, Arg134–Asp164, and Gln203–Leu353. A compositionally biased stretch (basic residues) spans Tyr31 to Tyr45. The span at Arg46 to Arg57 shows a compositional bias: basic and acidic residues. Positions Gly137 to Phe157 are enriched in basic residues. A compositionally biased stretch (low complexity) spans Gln209–Ala220. Positions Pro255–Thr271 are enriched in polar residues. The span at Val275–Arg347 shows a compositional bias: acidic residues. Positions Glu299–Val335 form a coiled coil.

The protein localises to the nucleus. Functionally, regulator of histone epigenetic modifications and chromatin compaction into the sperm head, required for histone-to-protamine (HTP) transition. HTP is a key event in which somatic histones are first replaced by testis-specific histone variants, then transition proteins (TNPs) are incorporated into the spermatid nucleus, and finally protamines (PRMs) replace the TNPs to promote chromatin condensation. The chain is Coiled-coil domain-containing glutamate-rich protein 1 (Ccer1) from Rattus norvegicus (Rat).